The primary structure comprises 440 residues: UDP-N-acetylmuramoylalanine--D-glutamate ligase (440 aa).

Position 115-121 (115-121 (GSNGKST)) interacts with ATP.

Belongs to the MurCDEF family.

It localises to the cytoplasm. It catalyses the reaction UDP-N-acetyl-alpha-D-muramoyl-L-alanine + D-glutamate + ATP = UDP-N-acetyl-alpha-D-muramoyl-L-alanyl-D-glutamate + ADP + phosphate + H(+). The protein operates within cell wall biogenesis; peptidoglycan biosynthesis. Functionally, cell wall formation. Catalyzes the addition of glutamate to the nucleotide precursor UDP-N-acetylmuramoyl-L-alanine (UMA). The protein is UDP-N-acetylmuramoylalanine--D-glutamate ligase of Aliivibrio fischeri (strain ATCC 700601 / ES114) (Vibrio fischeri).